Here is a 198-residue protein sequence, read N- to C-terminus: Recombination protein RecR (198 aa).

A C4-type zinc finger spans residues 56-71 (CHVCGNVDTGDPCGIC). One can recognise a Toprim domain in the interval 79 to 174 (RMLCVVEEVA…RLTQLAHGLP (96 aa)).

It belongs to the RecR family.

May play a role in DNA repair. It seems to be involved in an RecBC-independent recombinational process of DNA repair. It may act with RecF and RecO. In Rhizorhabdus wittichii (strain DSM 6014 / CCUG 31198 / JCM 15750 / NBRC 105917 / EY 4224 / RW1) (Sphingomonas wittichii), this protein is Recombination protein RecR.